We begin with the raw amino-acid sequence, 297 residues long: MTTPLMHSSIKSLKLINQGKVRDIYDIDDRHMLLVASDRLSAFDVILPTPIKDKGAILTQIANFWFEKLKHIVPNHLTGIDPNTVVKDPAEQAQLGPRALVVKKLKPLPIEAIVRGYLAGSGWKEYQASQSVCGIPLPAGLQEAAQLPEPLFTPSSKAEVGDHDENITLEKCAQLIGPELADKVARVSVQLYKEAAAYALGRGIIIADTKFEFGLDEAGELYLIDEVLTPDSSRFWPQDQYQVGSNPPSFDKQYVRDWLESTGWNKTPPGPALPDEVAARTADKYREAFERLTGKPF.

This sequence belongs to the SAICAR synthetase family.

It carries out the reaction 5-amino-1-(5-phospho-D-ribosyl)imidazole-4-carboxylate + L-aspartate + ATP = (2S)-2-[5-amino-1-(5-phospho-beta-D-ribosyl)imidazole-4-carboxamido]succinate + ADP + phosphate + 2 H(+). It participates in purine metabolism; IMP biosynthesis via de novo pathway; 5-amino-1-(5-phospho-D-ribosyl)imidazole-4-carboxamide from 5-amino-1-(5-phospho-D-ribosyl)imidazole-4-carboxylate: step 1/2. The protein is Phosphoribosylaminoimidazole-succinocarboxamide synthase of Methylobacillus flagellatus (strain ATCC 51484 / DSM 6875 / VKM B-1610 / KT).